We begin with the raw amino-acid sequence, 170 residues long: Lipoprotein signal peptidase (170 aa).

3 helical membrane passes run 12-32 (WYWVVVLVFLADQLSKQWVLA), 67-87 (WQRWLFTLVAVGFSTLLTVWL), and 93-113 (SLWKLNLAYTLVIGGALGNLI). Active-site residues include Asp-123 and Asp-141. Residues 137–157 (FNIADSAIFIGAVLIIWDSFF) traverse the membrane as a helical segment.

It belongs to the peptidase A8 family.

It is found in the cell inner membrane. The catalysed reaction is Release of signal peptides from bacterial membrane prolipoproteins. Hydrolyzes -Xaa-Yaa-Zaa-|-(S,diacylglyceryl)Cys-, in which Xaa is hydrophobic (preferably Leu), and Yaa (Ala or Ser) and Zaa (Gly or Ala) have small, neutral side chains.. The protein operates within protein modification; lipoprotein biosynthesis (signal peptide cleavage). This protein specifically catalyzes the removal of signal peptides from prolipoproteins. The sequence is that of Lipoprotein signal peptidase from Shewanella sp. (strain MR-4).